We begin with the raw amino-acid sequence, 343 residues long: MTTNKQVIFKDHVSGFPKESDFNFTTTTVELRVPEGSKSVLVKNLYLSCDPYMRSRMGKPDPSSALAQAYAPGKPIYGYGVSRVIESGHPDYKKGDLLWGIVGWEEYSVITPMAHMHFKIQHTDVPLSYYTGLLGMPGMTAYAGFYEVCSPKKGETVYVSAASGAVGQLVGQFAKMMGCYVVGSAGSKEKVDLLKTKFGFDDAFNYKEESDLSAALKRCFPKGIDMYFENVGGKMLDAVLLNMNPHGRIAVCGMISQYNLENQEGVHNLSNIIYKRIRIQGFVVADFYDKYPKFLELVLPRIKEGKITYVEDVADGLEKAPEALVGLFHGKNVGKQVVVIARE.

Substrate-binding residues include Y52 and Y79. Residues 164 to 167, K190, Y206, N230, 252 to 258, 282 to 284, and N332 each bind NADP(+); these read GAVG, CGMISQY, and FVV.

This sequence belongs to the NADP-dependent oxidoreductase L4BD family. Homodimer.

It carries out the reaction an n-alkanal + NAD(+) = an alk-2-enal + NADH + H(+). It catalyses the reaction an n-alkanal + NADP(+) = an alk-2-enal + NADPH + H(+). Its function is as follows. Catalyzes the reduction of the 7-8 double bond of phenylpropanal substrates, such as p-coumaryl aldehyde and coniferyl aldehyde (in vitro). Has activity towards toxic substrates, such as 4-hydroxy-(2E)-nonenal (in vitro). May play a distinct role in plant antioxidant defense and is possibly involved in NAD(P)/NAD(P)h homeostasis. In Arabidopsis thaliana (Mouse-ear cress), this protein is NADP-dependent alkenal double bond reductase P2 (P2).